A 301-amino-acid chain; its full sequence is Quinolinate synthase (301 aa).

The iminosuccinate site is built by His21 and Ser38. Cys83 is a [4Fe-4S] cluster binding site. Iminosuccinate-binding positions include 109 to 111 (YIN) and Ser126. Cys169 lines the [4Fe-4S] cluster pocket. Iminosuccinate contacts are provided by residues 195–197 (HPE) and Thr212. Cys257 contributes to the [4Fe-4S] cluster binding site.

The protein belongs to the quinolinate synthase family. Type 2 subfamily. [4Fe-4S] cluster is required as a cofactor.

The protein resides in the cytoplasm. The enzyme catalyses iminosuccinate + dihydroxyacetone phosphate = quinolinate + phosphate + 2 H2O + H(+). It functions in the pathway cofactor biosynthesis; NAD(+) biosynthesis; quinolinate from iminoaspartate: step 1/1. Catalyzes the condensation of iminoaspartate with dihydroxyacetone phosphate to form quinolinate. In Clostridium perfringens (strain ATCC 13124 / DSM 756 / JCM 1290 / NCIMB 6125 / NCTC 8237 / Type A), this protein is Quinolinate synthase.